The primary structure comprises 427 residues: 3-phosphoshikimate 1-carboxyvinyltransferase (427 aa).

Residues Lys-22, Ser-23, and Arg-27 each contribute to the 3-phosphoshikimate site. Position 22 (Lys-22) interacts with phosphoenolpyruvate. Residues Gly-96 and Arg-124 each contribute to the phosphoenolpyruvate site. 3-phosphoshikimate-binding residues include Ser-169, Ser-170, Gln-171, Ser-197, Asp-313, Asn-336, and Lys-340. Residue Gln-171 coordinates phosphoenolpyruvate. The active-site Proton acceptor is the Asp-313. Residues Arg-344, Arg-386, and Lys-411 each coordinate phosphoenolpyruvate.

The protein belongs to the EPSP synthase family. As to quaternary structure, monomer.

It is found in the cytoplasm. The catalysed reaction is 3-phosphoshikimate + phosphoenolpyruvate = 5-O-(1-carboxyvinyl)-3-phosphoshikimate + phosphate. Its pathway is metabolic intermediate biosynthesis; chorismate biosynthesis; chorismate from D-erythrose 4-phosphate and phosphoenolpyruvate: step 6/7. Its function is as follows. Catalyzes the transfer of the enolpyruvyl moiety of phosphoenolpyruvate (PEP) to the 5-hydroxyl of shikimate-3-phosphate (S3P) to produce enolpyruvyl shikimate-3-phosphate and inorganic phosphate. This chain is 3-phosphoshikimate 1-carboxyvinyltransferase, found in Enterobacter sp. (strain 638).